Consider the following 424-residue polypeptide: Double homeobox protein 4 (424 aa).

Positions 1-10 (MALPTPSDST) are enriched in polar residues. Disordered stretches follow at residues 1–24 (MALPTPSDSTLPAEARGRGRRRRL), 72–102 (SRQLRQHRRESRPWPGRRGPPEGRRKRTAVT), 218–362 (LQPS…LQEP), and 388–414 (QPLLETEAPGELEASEEAASLEAPLSE). 2 DNA-binding regions (homeobox) span residues 19-78 (GRRR…LRQH) and 94-153 (GRRK…PGQG). Residues 265–274 (KSREDRDPQR) show a composition bias toward basic and acidic residues. 2 stretches are compositionally biased toward low complexity: residues 278–302 (PGPCAVAQPGPAQAGPQGQGVLAPP) and 319–329 (AGAAWEPQAGA). The required for interaction with EP300 and CREBBP, and for transcriptional activation of target genes stretch occupies residues 327–424 (AGAAPPPQPA…EEYRALLEEL (98 aa)). Residues 405–424 (AASLEAPLSEEEYRALLEEL) form an important for transcriptional activation of target genes region.

Belongs to the paired homeobox family. Binds DNA as a monomer. Interacts (via C-terminus) with EP300 and CREBBP. In terms of tissue distribution, isoform 1: Does not seem to be expressed in normal muscle, but is detected in muscle of individuals with FSHD, and also in testis (at protein level). Isoform 1: Does not seem to be expressed in normal muscle, but in muscle of individuals with FSHD, where it may be toxic to cells. Isoform 2: Detected in skeletal muscle, fibroblasts and testis from healthy individuals.

It localises to the nucleus. Its subcellular location is the cytoplasm. Functionally, transcription factor that is selectively and transiently expressed in cleavage-stage embryos. Binds to double-stranded DNA elements with the consensus sequence 5'-TAATCTAATCA-3'. Binds to chromatin containing histone H3 acetylated at 'Lys-27' (H3K27ac) and promotes deacetylation of H3K27ac. In parallel, binds to chromatin that lacks histone H3 acetylation at 'Lys-27' (H3K27ac) and recruits EP300 and CREBBP to promote acetylation of histone H3 at 'Lys-27' at new sites. Involved in transcriptional regulation of numerous genes, primarily as transcriptional activator, but also mediates repression of a set of target genes. Promotes expression of ZSCAN4 and KDM4E, two proteins with essential roles during early embryogenesis. Promotes nuclear translocation of CTNNB1/beta-catenin and its subsequent activation of target genes. Heterologous expression in cultured embryonic stem cells mediates transcription of HERVL retrotransposons and transcripts derived from ACRO1 and HSATII satellite repeats. May activate expression of PITX1. May regulate microRNA (miRNA) expression. Inappropriate expression can inhibit myogenesis and promote apoptosis. In terms of biological role, probably inactive as a transcriptional activator, due to the absence of the C-terminal region that is important for transcriptional activation. Can inhibit transcriptional activation mediated by isoform 1. Heterologous expression of isoform 2 has no deleterious effect on cell survival. In Homo sapiens (Human), this protein is Double homeobox protein 4.